Reading from the N-terminus, the 142-residue chain is Deoxyuridine 5'-triphosphate nucleotidohydrolase (142 aa).

Residues 62–64 (RSG), asparagine 75, and 79–81 (TID) each bind substrate.

Belongs to the dUTPase family. Mg(2+) serves as cofactor.

The catalysed reaction is dUTP + H2O = dUMP + diphosphate + H(+). It participates in pyrimidine metabolism; dUMP biosynthesis; dUMP from dCTP (dUTP route): step 2/2. This enzyme is involved in nucleotide metabolism: it produces dUMP, the immediate precursor of thymidine nucleotides and it decreases the intracellular concentration of dUTP so that uracil cannot be incorporated into DNA. This Picosynechococcus sp. (strain ATCC 27264 / PCC 7002 / PR-6) (Agmenellum quadruplicatum) protein is Deoxyuridine 5'-triphosphate nucleotidohydrolase.